The following is a 193-amino-acid chain: Imidazoleglycerol-phosphate dehydratase (193 aa).

It belongs to the imidazoleglycerol-phosphate dehydratase family.

It localises to the cytoplasm. The enzyme catalyses D-erythro-1-(imidazol-4-yl)glycerol 3-phosphate = 3-(imidazol-4-yl)-2-oxopropyl phosphate + H2O. It functions in the pathway amino-acid biosynthesis; L-histidine biosynthesis; L-histidine from 5-phospho-alpha-D-ribose 1-diphosphate: step 6/9. In Staphylococcus carnosus (strain TM300), this protein is Imidazoleglycerol-phosphate dehydratase.